A 695-amino-acid chain; its full sequence is MADLSKYRNIGIFAHVDAGKTTTTERILKLTGKIHRLGEVHDGASTMDFMDQEAERGITIQSAATTCFWKDHRFNVIDTPGHVDFTVEVYRSLKVLDGGIGVFCGSGGVEPQSETNWRYANESEVSRLIFVNKLDRMGADFFRVVEQVKKVLGANPLVMTLPIGREDEFVGVVDVLTRQAFVWDDSGLPENYEIKEIPADMVDQVEEYREMMIESAVEQDDELMMAYMEGEEPSIEQIKACIRKGTRDLAFFPTYCGSAFKNKGMQLVLDAVVDYLPSPTEVEPQPLTNPETGEPTGEVATVSVDAPLKALAFKIMDDRFGALTFIRIYSGRLKKGDTVLNSATGKTERIGRMVEMHANDRNELEAAQAGDIIAVVGMKNVQTGHTLCDPKHECTLEPMIFPEPVISIAVKPKDKNGSEKMGIAIGKMVAEDPSFQVETDEDSGETILKGMGELHLDIKVDILKRTYGVELEVGAPQVAYRETITKAVEDSYTHKKQSGGSGQFGKIDYRIKPGEPNSGFTFKSTVVGGNVPKEFWPAVEKGFEGMMQNGVLAGFPTLDVEVELFDGGFHAVDSSAIAFEIAAKGAFRQSMPKAGPQLLEPIMKVDVFTPEDHVGDVIGDLNRRRGMIKNQEMGATGVRVKADVPLSEMFGYIGTLRTMTSGRGQFSMEFSHYSACPSNVAEQVIAEVKERNAKK.

The tr-type G domain occupies 5 to 280; the sequence is SKYRNIGIFA…AVVDYLPSPT (276 aa). GTP is bound by residues 14 to 21, 78 to 82, and 132 to 135; these read AHVDAGKT, DTPGH, and NKLD.

Belongs to the TRAFAC class translation factor GTPase superfamily. Classic translation factor GTPase family. EF-G/EF-2 subfamily.

It is found in the cytoplasm. Catalyzes the GTP-dependent ribosomal translocation step during translation elongation. During this step, the ribosome changes from the pre-translocational (PRE) to the post-translocational (POST) state as the newly formed A-site-bound peptidyl-tRNA and P-site-bound deacylated tRNA move to the P and E sites, respectively. Catalyzes the coordinated movement of the two tRNA molecules, the mRNA and conformational changes in the ribosome. This is Elongation factor G 2 from Vibrio vulnificus (strain YJ016).